Consider the following 37-residue polypeptide: Large ribosomal subunit protein bL36A (37 aa).

Belongs to the bacterial ribosomal protein bL36 family.

The sequence is that of Large ribosomal subunit protein bL36A from Neisseria meningitidis serogroup C (strain 053442).